A 487-amino-acid chain; its full sequence is Cysteine--tRNA ligase (487 aa).

Residue cysteine 30 coordinates Zn(2+). Positions proline 32 to histidine 42 match the 'HIGH' region motif. Zn(2+) is bound by residues cysteine 226, histidine 251, and glutamate 255. The 'KMSKS' region signature appears at lysine 283–serine 287. ATP is bound at residue lysine 286.

It belongs to the class-I aminoacyl-tRNA synthetase family. As to quaternary structure, monomer. Zn(2+) serves as cofactor.

It localises to the cytoplasm. It carries out the reaction tRNA(Cys) + L-cysteine + ATP = L-cysteinyl-tRNA(Cys) + AMP + diphosphate. This chain is Cysteine--tRNA ligase (cysS), found in Chlorobaculum tepidum (strain ATCC 49652 / DSM 12025 / NBRC 103806 / TLS) (Chlorobium tepidum).